A 313-amino-acid chain; its full sequence is LOB domain-containing protein 36 (313 aa).

The region spanning 6–107 (SPCAACKFLR…HDLENAKKEL (102 aa)) is the LOB domain. The tract at residues 245–313 (GNFVDSPSTN…SEEGRRNVIG (69 aa)) is disordered. The span at 249-260 (DSPSTNNNYHTD) shows a compositional bias: polar residues. The span at 280 to 302 (PSQSSQPLPLQTQETQTQTQPNS) shows a compositional bias: low complexity.

Belongs to the LOB domain-containing protein family. Expressed in trichomes, at the base of many lateral organs, including branching points of the inflorescence and floral organs and in the distal part of the pistil at stages when style and stigma start to develop. Also detected in pedicels and at the base of petals and sepals.

Controls the proximal-distal patterning in petals and the adaxial-abaxial determination of leaves. Involved in the repression of the homeobox gene BP. This is LOB domain-containing protein 36 (LBD36) from Arabidopsis thaliana (Mouse-ear cress).